We begin with the raw amino-acid sequence, 1046 residues long: SWI/SNF-related matrix-associated actin-dependent regulator of chromatin subfamily A member 1 (1046 aa).

The interval 27–61 (EQPGPSTFKEEGAAAAATEGTTATEKGEKKEKITS) is disordered. Over residues 39–50 (AAAAATEGTTAT) the composition is skewed to low complexity. Phosphoserine is present on residues serine 120 and serine 123. In terms of domain architecture, Helicase ATP-binding spans 199–364 (ISLYENGVNG…WALLNFLLPD (166 aa)). 212-219 (DEMGLGKT) contributes to the ATP binding site. The short motif at 315–318 (DEAH) is the DEAH box element. The Helicase C-terminal domain occupies 494 to 645 (ALDKLLARIK…SIVIQQGRLI (152 aa)). Glycyl lysine isopeptide (Lys-Gly) (interchain with G-Cter in SUMO2) cross-links involve residues lysine 654, lysine 720, and lysine 742. The segment at 819–840 (AQREEQKKIDGAEPLTPQETEE) is disordered. Over residues 820–829 (QREEQKKIDG) the composition is skewed to basic and acidic residues. An SANT 1 domain is found at 847-899 (QGFTNWTKRDFNQFIKANEKYGRDDIDNIAREVEGKSPEEVMEYSAVFWERCN). Tyrosine 946 is modified (phosphotyrosine). Residues 950–1014 (KGKNYTEEED…QRRCNTLISL (65 aa)) form the SANT 2 domain. Positions 1003–1037 (EFQRRCNTLISLIEKENMEIEERERAEKKKRATKT) form a coiled coil. Positions 1025–1046 (RERAEKKKRATKTPMVKFSAFS) are disordered.

Belongs to the SNF2/RAD54 helicase family. ISWI subfamily. As to quaternary structure, may form homodimers. Component of the ACF-1 ISWI chromatin remodeling complex at least composed of SMARCA1 and BAZ1A, which regulates the spacing of histone octamers on the DNA template to facilitate access to DNA. Within the complex interacts with BAZ1A; the interaction is direct. Component of the WICH-1 ISWI chromatin remodeling complex at least composed of SMARCA1 and BAZ1B/WSTF. Within the complex interacts with BAZ1B/WSTF. Component of the NoRC-1 ISWI chromatin remodeling complex at least composed of SMARCA1 and BAZ2A/TIP5. Within the complex interacts with BAZ2A/TIP5. Component of the BRF-1 ISWI chromatin remodeling complex at least composed of SMARCA1 and BAZ2B. Within the complex interacts with BAZ2B. Component of the NURF-1 ISWI chromatin remodeling complex (also called the nucleosome-remodeling factor (NURF) complex) at least composed of SMARCA1, BPTF, RBBP4 and RBBP7. Within the complex interacts with BPTF. Within the complex interacts with RBBP4 and RBBP7. Component of the CERF-1 ISWI chromatin remodeling complex (also called the CECR2-containing-remodeling factor (CERF) complex) at least composed of CECR2 and SMARCA1. LUZP1 is detected as part of the CERF-1 complex in embryonic stem cells where it is involved in complex stabilization but is not detected in the complex in the testis. Component of the RSF-1 ISWI chromatin remodeling complex at least composed of SMARCA1 and RSF1. Within the complex interacts with RSF1. Interacts with PRLR. Interacts with ERCC6. In terms of tissue distribution, predominantly expressed in cortex, cerebellum, ovaries, testes, uterus and placenta.

It localises to the nucleus. The catalysed reaction is ATP + H2O = ADP + phosphate + H(+). Functionally, ATPase that possesses intrinsic ATP-dependent chromatin-remodeling activity. ATPase activity is substrate-dependent, and is increased when nucleosomes are the substrate, but is also catalytically active when DNA alone is the substrate. Catalytic subunit of ISWI chromatin-remodeling complexes, which form ordered nucleosome arrays on chromatin and facilitate access to DNA during DNA-templated processes such as DNA replication, transcription, and repair. Within the ISWI chromatin-remodeling complexes, slides edge- and center-positioned histone octamers away from their original location on the DNA template. Catalytic activity and histone octamer sliding propensity is regulated and determined by components of the ISWI chromatin-remodeling complexes. The BAZ1A-, BAZ1B-, BAZ2A- and BAZ2B-containing ISWI chromatin-remodeling complexes regulate the spacing of nucleosomes along the chromatin and have the ability to slide mononucleosomes to the center of a DNA template. The CECR2- and RSF1-containing ISWI chromatin-remodeling complexes do not have the ability to slide mononucleosomes to the center of a DNA template. Within the NURF-1 and CERF-1 ISWI chromatin remodeling complexes, nucleosomes are the preferred substrate for its ATPase activity. Within the NURF-1 ISWI chromatin-remodeling complex, binds to the promoters of En1 and En2 to positively regulate their expression and promote brain development. May promote neurite outgrowth. May be involved in the development of luteal cells. Facilitates nucleosome assembly during DNA replication, ensuring replication fork progression and genomic stability by preventing replication stress and nascent DNA gaps. This is SWI/SNF-related matrix-associated actin-dependent regulator of chromatin subfamily A member 1 (Smarca1) from Mus musculus (Mouse).